Consider the following 90-residue polypeptide: Probable Fe(2+)-trafficking protein (90 aa).

This sequence belongs to the Fe(2+)-trafficking protein family.

Functionally, could be a mediator in iron transactions between iron acquisition and iron-requiring processes, such as synthesis and/or repair of Fe-S clusters in biosynthetic enzymes. The sequence is that of Probable Fe(2+)-trafficking protein from Acidovorax ebreus (strain TPSY) (Diaphorobacter sp. (strain TPSY)).